The primary structure comprises 156 residues: Small ribosomal subunit protein uS7 (156 aa).

Belongs to the universal ribosomal protein uS7 family. In terms of assembly, part of the 30S ribosomal subunit. Contacts proteins S9 and S11.

Its function is as follows. One of the primary rRNA binding proteins, it binds directly to 16S rRNA where it nucleates assembly of the head domain of the 30S subunit. Is located at the subunit interface close to the decoding center, probably blocks exit of the E-site tRNA. The chain is Small ribosomal subunit protein uS7 from Treponema denticola (strain ATCC 35405 / DSM 14222 / CIP 103919 / JCM 8153 / KCTC 15104).